Consider the following 699-residue polypeptide: SHC SH2 domain-binding protein 1 homolog A (699 aa).

3 PbH1 repeats span residues 480-502 (SAEL…EIYP), 503-524 (GSKC…LIKD), and 532-554 (IPKI…VLVK). Residues 603–627 (AVEHTNNLEKDQGNLAIAKEEVECE) adopt a coiled-coil conformation.

It localises to the midbody. It is found in the cytoplasm. The protein localises to the cytoskeleton. Its subcellular location is the spindle. May play a role in signaling pathways governing cellular proliferation. The protein is SHC SH2 domain-binding protein 1 homolog A (shcbp1-a) of Xenopus laevis (African clawed frog).